Reading from the N-terminus, the 930-residue chain is Isoleucine--tRNA ligase (930 aa).

The 'HIGH' region signature appears at 57–67 (PYANGNIHVGH). Glu-554 contributes to the L-isoleucyl-5'-AMP binding site. Positions 595–599 (KMSKS) match the 'KMSKS' region motif. Lys-598 provides a ligand contact to ATP. Zn(2+) contacts are provided by Cys-888, Cys-891, Cys-908, and Cys-911.

The protein belongs to the class-I aminoacyl-tRNA synthetase family. IleS type 1 subfamily. Monomer. Zn(2+) serves as cofactor.

Its subcellular location is the cytoplasm. It carries out the reaction tRNA(Ile) + L-isoleucine + ATP = L-isoleucyl-tRNA(Ile) + AMP + diphosphate. Functionally, catalyzes the attachment of isoleucine to tRNA(Ile). As IleRS can inadvertently accommodate and process structurally similar amino acids such as valine, to avoid such errors it has two additional distinct tRNA(Ile)-dependent editing activities. One activity is designated as 'pretransfer' editing and involves the hydrolysis of activated Val-AMP. The other activity is designated 'posttransfer' editing and involves deacylation of mischarged Val-tRNA(Ile). The polypeptide is Isoleucine--tRNA ligase (Streptococcus pneumoniae serotype 4 (strain ATCC BAA-334 / TIGR4)).